The following is a 1379-amino-acid chain: ABC multidrug transporter MDR2 (1379 aa).

Residues 65-85 (IALIVIGTIAGIGAGIPFPLL) traverse the membrane as a helical segment. An ABC transmembrane type-1 1 domain is found at 69–367 (VIGTIAGIGA…MAPFMHIFAS (299 aa)). Asparagine 97 is a glycosylation site (N-linked (GlcNAc...) asparagine). Helical transmembrane passes span 119 to 139 (VLQV…HTGC), 193 to 213 (KVGL…VAFL), 215 to 235 (VATI…MAFG), 301 to 321 (IQFG…FWQG), and 336 to 356 (VSVG…FVLS). Residues 403–682 (IELQDVTFNY…DGVYAGMVRL (280 aa)) form the ABC transporter 1 domain. Residue 438–445 (GTSGSGKS) coordinates ATP. 2 N-linked (GlcNAc...) asparagine glycosylation sites follow: asparagine 552 and asparagine 633. Positions 738–758 (YMPEEADSLPTEPENEKEKPK) are disordered. 4 helical membrane-spanning segments follow: residues 781-801 (LGLI…VIFG), 820-840 (GMLF…AVIV), 901-921 (IGVL…SHVI), and 922-942 (AWRI…SGVL). The ABC transmembrane type-1 2 domain maps to 781 to 1068 (LGLITSIMIG…MFALVPDISK (288 aa)). N-linked (GlcNAc...) asparagine glycosylation occurs at asparagine 989. A run of 2 helical transmembrane segments spans residues 1008–1028 (FWLS…YWWG) and 1032–1052 (ILAG…LLFS). The ABC transporter 2 domain occupies 1135 to 1374 (VQFRNVHFRY…CESYRANVIH (240 aa)). Residue 1170–1177 (GPSGSGKS) participates in ATP binding.

The protein belongs to the ABC transporter superfamily. ABCB family. Multidrug resistance exporter (TC 3.A.1.201) subfamily.

The protein resides in the cell membrane. Functionally, pleiotropic ABC efflux transporter that may be involved in the modulation susceptibility to a wide range of unrelated cytotoxic compounds. The protein is ABC multidrug transporter MDR2 of Trichophyton equinum (strain ATCC MYA-4606 / CBS 127.97) (Horse ringworm fungus).